A 296-amino-acid polypeptide reads, in one-letter code: Elongation factor Ts (296 aa).

Residues 79–82 form an involved in Mg(2+) ion dislocation from EF-Tu region; that stretch reads TDFV.

This sequence belongs to the EF-Ts family.

The protein localises to the cytoplasm. Functionally, associates with the EF-Tu.GDP complex and induces the exchange of GDP to GTP. It remains bound to the aminoacyl-tRNA.EF-Tu.GTP complex up to the GTP hydrolysis stage on the ribosome. The polypeptide is Elongation factor Ts (Acholeplasma laidlawii (strain PG-8A)).